The chain runs to 175 residues: Protein CENTRORADIALIS-like (175 aa).

This sequence belongs to the phosphatidylethanolamine-binding protein family. As to expression, expressed in tissues surrounding vascular bundles in hypocotyl of 2-week-old plants.

It is found in the cytoplasm. Its function is as follows. May form complexes with phosphorylated ligands by interfering with kinases and their effectors. Can substitute for TERMINAL FLOWER 1 (in vitro). This Arabidopsis thaliana (Mouse-ear cress) protein is Protein CENTRORADIALIS-like (CEN).